A 663-amino-acid chain; its full sequence is Alcohol oxidase 1 (663 aa).

8-38 (DILVLGGGSSGSCIAGRLANLDHSLKVGLIE) lines the FAD pocket. His-567 serves as the catalytic Proton acceptor. The Microbody targeting signal signature appears at 661 to 663 (ARF).

The protein belongs to the GMC oxidoreductase family. Homooctamer. FAD is required as a cofactor.

It localises to the peroxisome matrix. The catalysed reaction is a primary alcohol + O2 = an aldehyde + H2O2. It participates in energy metabolism; methane degradation. Its function is as follows. Major isoform of alcohol oxidase, which catalyzes the oxidation of methanol to formaldehyde and hydrogen peroxide, the first step in the methanol utilization pathway of methylotrophic yeasts. The polypeptide is Alcohol oxidase 1 (AOX1) (Komagataella phaffii (strain ATCC 76273 / CBS 7435 / CECT 11047 / NRRL Y-11430 / Wegner 21-1) (Yeast)).